We begin with the raw amino-acid sequence, 767 residues long: DNA topoisomerase 1 (767 aa).

Basic and acidic residues predominate over residues 1–23; sequence MSGDHLHNDSQIEADFRLNDSHK. The tract at residues 1 to 201 is disordered; sequence MSGDHLHNDS…NKKKKPKKEE (201 aa). N-acetylserine is present on S2. 2 positions are modified to phosphoserine: S2 and S10. A compositionally biased stretch (basic residues) spans 24 to 39; sequence HKDKHKDREHRHKEHK. The span at 40 to 110 shows a compositional bias: basic and acidic residues; the sequence is KDKEKDREKS…DAKIKKEKEN (71 aa). Position 59 is a phosphoserine (S59). Residue K103 forms a Glycyl lysine isopeptide (Lys-Gly) (interchain with G-Cter in SUMO2) linkage. K105 is covalently cross-linked (Glycyl lysine isopeptide (Lys-Gly) (interchain with G-Cter in SUMO); alternate). Residue K105 forms a Glycyl lysine isopeptide (Lys-Gly) (interchain with G-Cter in SUMO2); alternate linkage. Position 114 is a phosphoserine (S114). Residue K119 forms a Glycyl lysine isopeptide (Lys-Gly) (interchain with G-Cter in SUMO); alternate linkage. Residue K119 forms a Glycyl lysine isopeptide (Lys-Gly) (interchain with G-Cter in SUMO2); alternate linkage. K119 participates in a covalent cross-link: Glycyl lysine isopeptide (Lys-Gly) (interchain with G-Cter in SUMO1); alternate. A compositionally biased stretch (basic and acidic residues) spans 131–168; it reads PKEDIKPLKRPRDEDDADYKPKKIKTEDIKKEKKRKLE. Residues K136 and K150 each participate in a glycyl lysine isopeptide (Lys-Gly) (interchain with G-Cter in SUMO2) cross-link. K155 is covalently cross-linked (Glycyl lysine isopeptide (Lys-Gly) (interchain with G-Cter in SUMO); alternate). K155 participates in a covalent cross-link: Glycyl lysine isopeptide (Lys-Gly) (interchain with G-Cter in SUMO2); alternate. Residues K160 and K166 each participate in a glycyl lysine isopeptide (Lys-Gly) (interchain with G-Cter in SUMO2) cross-link. K174 participates in a covalent cross-link: Glycyl lysine isopeptide (Lys-Gly) (interchain with G-Cter in SUMO2); alternate. N6-acetyllysine; alternate is present on K174. Over residues 181–201 the composition is skewed to basic and acidic residues; it reads KDKDKKGAESDNKKKKPKKEE. K206 participates in a covalent cross-link: Glycyl lysine isopeptide (Lys-Gly) (interchain with G-Cter in SUMO2). K282 is modified (N6-acetyllysine). A Glycyl lysine isopeptide (Lys-Gly) (interchain with G-Cter in SUMO2) cross-link involves residue K338. Interaction with DNA stretches follow at residues 427–428 and 490–495; these read KY and RAGNEK. The Topo IB-type catalytic domain maps to 434-767; sequence SSRIKGEKDW…IDMTDEDYEF (334 aa). Phosphoserine; by CK2 is present on S508. Residue K551 forms a Glycyl lysine isopeptide (Lys-Gly) (interchain with G-Cter in SUMO2) linkage. The segment at 587 to 589 is interaction with DNA; that stretch reads TAK. Glycyl lysine isopeptide (Lys-Gly) (interchain with G-Cter in SUMO2) cross-links involve residues K644, K702, and K714. The O-(3'-phospho-DNA)-tyrosine intermediate role is filled by Y725.

It belongs to the type IB topoisomerase family. As to quaternary structure, monomer. Interacts with ERCC6. Interacts with TPRN; TPRN interacts with a number of DNA damage response proteins, is recruited to sites of DNA damage and may play a role in DNA damage repair. Sumoylated. Lys-119 is the main site of sumoylation. Sumoylation plays a role in partitioning TOP1 between nucleoli and nucleoplasm. Levels are dramatically increased on camptothecin (CPT) treatment. In terms of processing, phosphorylation at Ser-508 by CK2 increases binding to supercoiled DNA and sensitivity to camptothecin.

It localises to the nucleus. It is found in the nucleolus. Its subcellular location is the nucleoplasm. It carries out the reaction ATP-independent breakage of single-stranded DNA, followed by passage and rejoining.. Specifically inhibited by camptothecin (CPT), a plant alkaloid with antitumor activity. In terms of biological role, releases the supercoiling and torsional tension of DNA introduced during the DNA replication and transcription by transiently cleaving and rejoining one strand of the DNA duplex. Introduces a single-strand break via transesterification at a target site in duplex DNA. The scissile phosphodiester is attacked by the catalytic tyrosine of the enzyme, resulting in the formation of a DNA-(3'-phosphotyrosyl)-enzyme intermediate and the expulsion of a 5'-OH DNA strand. The free DNA strand then rotates around the intact phosphodiester bond on the opposing strand, thus removing DNA supercoils. Finally, in the religation step, the DNA 5'-OH attacks the covalent intermediate to expel the active-site tyrosine and restore the DNA phosphodiester backbone. Regulates the alternative splicing of tissue factor (F3) pre-mRNA in endothelial cells. Involved in the circadian transcription of the core circadian clock component BMAL1 by altering the chromatin structure around the ROR response elements (ROREs) on the BMAL1 promoter. This Cricetulus griseus (Chinese hamster) protein is DNA topoisomerase 1 (TOP1).